Here is a 729-residue protein sequence, read N- to C-terminus: Dipeptidyl peptidase 3 (729 aa).

Zn(2+) is bound at residue histidine 459. Glutamate 460 is an active-site residue. Zn(2+) is bound by residues histidine 464 and glutamate 517.

The protein belongs to the peptidase M49 family. Zn(2+) serves as cofactor.

It is found in the cytoplasm. The catalysed reaction is Release of an N-terminal dipeptide from a peptide comprising four or more residues, with broad specificity. Also acts on dipeptidyl 2-naphthylamides.. This chain is Dipeptidyl peptidase 3 (dpp3), found in Nematostella vectensis (Starlet sea anemone).